Reading from the N-terminus, the 336-residue chain is Protease HtpX homolog (336 aa).

Transmembrane regions (helical) follow at residues 7–24 (AMLL…GFLI) and 29–48 (GMMI…YWNA). A Zn(2+)-binding site is contributed by His130. Glu131 is an active-site residue. His134 contributes to the Zn(2+) binding site. The next 2 membrane-spanning stretches (helical) occupy residues 145 to 165 (IVAT…FLGG) and 171 to 191 (PFGF…AMIV). Position 200 (Glu200) interacts with Zn(2+). The segment covering 278 to 287 (QQMAGGTQAA) has biased composition (low complexity). The segment at 278–336 (QQMAGGTQAAPRPTPRQAGEQQPSGPWGQAPQAEQPAEPERPKANPWGRNPTGPKGRWS) is disordered.

The protein belongs to the peptidase M48B family. Zn(2+) is required as a cofactor.

It localises to the cell inner membrane. In Mesorhizobium japonicum (strain LMG 29417 / CECT 9101 / MAFF 303099) (Mesorhizobium loti (strain MAFF 303099)), this protein is Protease HtpX homolog.